Here is a 940-residue protein sequence, read N- to C-terminus: MDKIEVRGARTHNLKNINLVIPRDKLIVVTGLSGSGKSSLAFDTLYAEGQRRYVESLSAYARQFLSLMEKPDVDHIEGLSPAISIEQKSTSHNPRSTVGTITEIHDYLRLLYARVGEPRCPDHDVPLAAQTVSQMVDNVLSQPEGKRLMLLAPIIKERKGEHTKTLENLASQGYIRARIDGEVCDLSDPPKLELQKKHTIEVVVDRFKVRDDLTQRLAESFETALELSGGTAVVADMDDPKAEELLFSANFACPICGYSMRELEPRLFSFNNPAGACPTCDGLGVQQYFDPDRVIQNPELSLAGGAIRGWDRRNFYYFQMLKSLADHYKFDVEAPWGSLSANVHKVVLYGSGKENIEFKYMNDRGDTSIRRHPFEGVLHNMERRYKETESSAVREELAKFISNRPCASCEGTRLRREARHVYVENTPLPAISDMSIGHAMEFFNNLKLAGQRAKIAEKILKEIGDRLKFLVNVGLNYLTLSRSAETLSGGEAQRIRLASQIGAGLVGVMYVLDEPSIGLHQRDNERLLGTLIHLRDLGNTVIVVEHDEDAIRAADHVIDIGPGAGVHGGEVVAEGPLEAIMAVPESLTGQYMSGKRKIEVPKKRVPANPEKVLKLTGARGNNLKDVTLTLPVGLFTCITGVSGSGKSTLINDTLFPIAQRQLNGATIAEPAPYRDIQGLEHFDKVIDIDQSPIGRTPRSNPATYTGVFTPVRELFAGVPESRARGYTPGRFSFNVRGGRCEACQGDGVIKVEMHFLPDIYVPCDQCKGKRYNRETLEIKYKGKTIHEVLDMTIEEAREFFDAVPALARKLQTLMDVGLTYIRLGQSATTLSGGEAQRVKLARELSKRGTGQTLYILDEPTTGLHFADIQQLLDVLHKLRDQGNTIVVIEHNLDVIKTADWIVDLGPEGGSGGGEILVSGTPETVAECEASHTARFLKPML.

31-38 is an ATP binding site; sequence GLSGSGKS. The C4-type zinc-finger motif lies at 253-280; sequence CPICGYSMRELEPRLFSFNNPAGACPTC. 2 consecutive ABC transporter domains span residues 310 to 587 and 607 to 937; these read WDRR…PESL and ANPE…RFLK. 640-647 is an ATP binding site; it reads GVSGSGKS. The segment at 740–766 adopts a C4-type zinc-finger fold; sequence CEACQGDGVIKVEMHFLPDIYVPCDQC.

The protein belongs to the ABC transporter superfamily. UvrA family. In terms of assembly, forms a heterotetramer with UvrB during the search for lesions.

Its subcellular location is the cytoplasm. Functionally, the UvrABC repair system catalyzes the recognition and processing of DNA lesions. UvrA is an ATPase and a DNA-binding protein. A damage recognition complex composed of 2 UvrA and 2 UvrB subunits scans DNA for abnormalities. When the presence of a lesion has been verified by UvrB, the UvrA molecules dissociate. Plays a role in recovery after DNA ADP-ribosylation. The polypeptide is UvrABC system protein A (Escherichia coli O127:H6 (strain E2348/69 / EPEC)).